Reading from the N-terminus, the 264-residue chain is Apolipoprotein A-I (264 aa).

An N-terminal signal peptide occupies residues 1 to 18 (MKAVVLTVAVFFLTGSQA). Repeat copies occupy residues 67–88 (LKLL…EQIG) and 89–110 (PVTQ…QEMN). Residues 67–264 (LKLLDNWDSL…DEATKKLTTQ (198 aa)) form a 10 X approximate tandem repeats region. Residue Met-109 is modified to Methionine sulfoxide. One copy of the 3; half-length repeat lies at 111–121 (KDLEEVKLKVQ). Repeat copies occupy residues 122 to 143 (PYLD…QQVE), 144 to 165 (PLGT…EKLS), and 166 to 187 (PLGQ…THLA). One copy of the 7; truncated repeat lies at 188 to 207 (PYSDELRQRLAARLEALKES). The stretch at 208 to 229 (SSLADYQAKATEHLSALGEKAK) is repeat 8. A 9; half-length repeat occupies 230–240 (PALEDLRQGLL). The stretch at 241–264 (PVLENLKMSFWSAVDEATKKLTTQ) is repeat 10.

This sequence belongs to the apolipoprotein A1/A4/E family. As to quaternary structure, homodimer. Interacts with APOA1BP and CLU. Component of a sperm activating protein complex (SPAP), consisting of APOA1, an immunoglobulin heavy chain, an immunoglobulin light chain and albumin. Interacts with NDRG1. Interacts with SCGB3A2. Interacts with NAXE and YJEFN3. Post-translationally, glycosylated. Palmitoylated. In terms of processing, phosphorylation sites are present in the extracellular medium.

Its subcellular location is the secreted. Participates in the reverse transport of cholesterol from tissues to the liver for excretion by promoting cholesterol efflux from tissues and by acting as a cofactor for the lecithin cholesterol acyltransferase (LCAT). As part of the SPAP complex, activates spermatozoa motility. The protein is Apolipoprotein A-I (ApoA1) of Marmota monax (Woodchuck).